Consider the following 147-residue polypeptide: Protein archease (147 aa).

Residues aspartate 17, aspartate 146, and isoleucine 147 each contribute to the Ca(2+) site.

Belongs to the archease family.

Activates the tRNA-splicing ligase complex by facilitating the enzymatic turnover of catalytic subunit RtcB. Acts by promoting the guanylylation of RtcB, a key intermediate step in tRNA ligation. Can also alter the NTP specificity of RtcB such that ATP, dGTP or ITP is used efficiently. The protein is Protein archease of Pyrobaculum calidifontis (strain DSM 21063 / JCM 11548 / VA1).